Consider the following 574-residue polypeptide: MPRGLELLIAQTILQGFDAQYGRFLEVTSGAQQRFEQADWHAVQQAMKNRIHLYDHHVGLVVEQLRCITNGQSTDAAFLLRVKEHYTRLLPDYPRFEIAESFFNSVYCRLFDHRSLTPERLFIFSSQPERRFRTIPRPLAKDFHPDHGWESLLMRVISDLPLRLRWQNKSRDIHYIVRHLTETLGTDNLAESHLQVANELFYRNKAAWLVGKLITPSGTLPFLLPIHQTDDGELFIDTCLTTTAEASIVFGFARSYFMVYAPLPAALVEWLREILPGKTTAELYMAIGCQKHAKTESYREYLVYLQGCNEQFIEAPGIRGMVMLVFTLPGFDRVFKVIKDRFAPQKEMSAAHVRACYQLVKEHDRVGRMADTQEFENFVLEKRHISPALMALLLQEAAEKITDLGEQIVIRHLYIERRMVPLNIWLEQVEGQQLRDAIEEYGNAIRQLAAANIFPGDMLFKNFGVTRHGRVVFYDYDEICYMTEVNFRDIPLPRYPEDELASEPWYSVSPGDVFPEEFRHWLCADPRIGPLFEEMHADLFRADYWRALQNRIREGHVEDVYAYRRRQRFSVRFV.

ATP contacts are provided by residues 315–321 (APGIRGM) and lysine 336. Aspartate 371 is a catalytic residue.

The protein belongs to the AceK family.

The protein localises to the cytoplasm. It catalyses the reaction L-seryl-[isocitrate dehydrogenase] + ATP = O-phospho-L-seryl-[isocitrate dehydrogenase] + ADP + H(+). Functionally, bifunctional enzyme which can phosphorylate or dephosphorylate isocitrate dehydrogenase (IDH) on a specific serine residue. This is a regulatory mechanism which enables bacteria to bypass the Krebs cycle via the glyoxylate shunt in response to the source of carbon. When bacteria are grown on glucose, IDH is fully active and unphosphorylated, but when grown on acetate or ethanol, the activity of IDH declines drastically concomitant with its phosphorylation. This chain is Isocitrate dehydrogenase kinase/phosphatase, found in Escherichia coli O127:H6 (strain E2348/69 / EPEC).